Here is a 124-residue protein sequence, read N- to C-terminus: Putative outer membrane protein TC_0858 (124 aa).

An N-terminal signal peptide occupies residues 1–31 (MGKTKKRKQSITLIEMMVVITLIGIISGALA).

Its subcellular location is the cell outer membrane. The protein is Putative outer membrane protein TC_0858 of Chlamydia muridarum (strain MoPn / Nigg).